A 399-amino-acid polypeptide reads, in one-letter code: Dual-specificity RNA methyltransferase RlmN (399 aa).

The active-site Proton acceptor is glutamate 121. The Radical SAM core domain occupies 127-376; the sequence is DVDRGTLCVS…VRTPRGRDIL (250 aa). A disulfide bridge connects residues cysteine 134 and cysteine 379. Residues cysteine 141, cysteine 145, and cysteine 148 each contribute to the [4Fe-4S] cluster site. Residues 205-206, serine 237, 259-261, and asparagine 336 contribute to the S-adenosyl-L-methionine site; these read GE and SLH. Cysteine 379 (S-methylcysteine intermediate) is an active-site residue.

Belongs to the radical SAM superfamily. RlmN family. [4Fe-4S] cluster serves as cofactor.

It is found in the cytoplasm. It carries out the reaction adenosine(2503) in 23S rRNA + 2 reduced [2Fe-2S]-[ferredoxin] + 2 S-adenosyl-L-methionine = 2-methyladenosine(2503) in 23S rRNA + 5'-deoxyadenosine + L-methionine + 2 oxidized [2Fe-2S]-[ferredoxin] + S-adenosyl-L-homocysteine. The catalysed reaction is adenosine(37) in tRNA + 2 reduced [2Fe-2S]-[ferredoxin] + 2 S-adenosyl-L-methionine = 2-methyladenosine(37) in tRNA + 5'-deoxyadenosine + L-methionine + 2 oxidized [2Fe-2S]-[ferredoxin] + S-adenosyl-L-homocysteine. In terms of biological role, specifically methylates position 2 of adenine 2503 in 23S rRNA and position 2 of adenine 37 in tRNAs. m2A2503 modification seems to play a crucial role in the proofreading step occurring at the peptidyl transferase center and thus would serve to optimize ribosomal fidelity. This is Dual-specificity RNA methyltransferase RlmN from Methylocella silvestris (strain DSM 15510 / CIP 108128 / LMG 27833 / NCIMB 13906 / BL2).